Consider the following 669-residue polypeptide: JmjC domain-containing histone demethylation protein 1 (669 aa).

Residues 1–61 (MTAVAASSRV…RRKKPRTELV (61 aa)) are disordered. Composition is skewed to polar residues over residues 16–27 (ASSSAHPRTLRS) and 36–49 (HDSS…QSKQ). A PHD-type zinc finger spans residues 65-126 (ELDCAACPAV…KWYCQPCITR (62 aa)). Disordered stretches follow at residues 131–150 (FESG…RPPR) and 220–256 (PPDR…QATH). Positions 246-255 (KPARAKKQAT) are enriched in basic residues. The 163-residue stretch at 332–494 (VTGTPMQAYV…TQWKLVEIEE (163 aa)) folds into the JmjC domain. Histidine 390 and aspartate 392 together coordinate Fe cation. Lysine 407 lines the substrate pocket. Fe cation is bound at residue histidine 462.

It belongs to the JHDM1 histone demethylase family. The cofactor is Fe(2+).

The protein resides in the nucleus. The catalysed reaction is N(6),N(6)-dimethyl-L-lysyl(36)-[histone H3] + 2 2-oxoglutarate + 2 O2 = L-lysyl(36)-[histone H3] + 2 formaldehyde + 2 succinate + 2 CO2. Histone demethylase that specifically demethylates 'Lys-36' of histone H3, thereby playing a central role in histone code. The chain is JmjC domain-containing histone demethylation protein 1 (JHD1) from Mycosarcoma maydis (Corn smut fungus).